A 404-amino-acid chain; its full sequence is Deoxyguanosinetriphosphate triphosphohydrolase-like protein (404 aa).

A disordered region spans residues 1-33; sequence MSVGMAAPRAAYGCDPDRSRGRQFAEPPSNNRS. Residues 69-217 form the HD domain; that stretch reads RLTHSLEVAQ…AAIADDIAYD (149 aa).

This sequence belongs to the dGTPase family. Type 2 subfamily.

The sequence is that of Deoxyguanosinetriphosphate triphosphohydrolase-like protein from Rhodopseudomonas palustris (strain BisB5).